Here is a 363-residue protein sequence, read N- to C-terminus: 2,5-diketocamphane 1,2-monooxygenase 2 (363 aa).

FMN contacts are provided by residues Met-74 and 186 to 194 (TGLTKNSSS).

The protein belongs to the bacterial luciferase oxidoreductase family. As to quaternary structure, homodimer. Likely forms a loose transient complex with a P.putida flavin reductase that provides the required FMNH(2) to the enzyme.

The enzyme catalyses (1R,4R)-bornane-2,5-dione + FMNH2 + O2 = (1R,4R)-5-oxo-1,2-campholide + FMN + H2O + H(+). The protein operates within terpene metabolism; (R)-camphor degradation. Functionally, involved in the degradation and assimilation of (+)-camphor, which allows P.putida strain NCIMB 10007 to grow on this enantiomer of camphor as the sole carbon source. Catalyzes the FMNH(2)-dependent lactonization of 2,5-diketocamphane via a Baeyer-Villiger oxidation to produce the unstable lactone 5-oxo-1,2-campholide with (R,R) configuration, that presumably undergoes spontaneous hydrolysis to form 2-oxo-Delta(3)-4,5,5-trimethylcyclopentenylacetate. Is also able to convert (+)-camphor and norcamphor to the corresponding lactone in vitro. Shows no conversion of (-)-camphor, (+)-fenchone, (-)-fenchone, and (+)-nopinone. Acts on other bicyclic ketones and, to a lesser extent, on some 2- and 4-substituted monocyclic ketones. The polypeptide is 2,5-diketocamphane 1,2-monooxygenase 2 (Pseudomonas putida (Arthrobacter siderocapsulatus)).